The following is a 310-amino-acid chain: Mitochondrial 2-oxodicarboxylate carrier 1 (310 aa).

The next 6 helical transmembrane spans lie at 9–29, 78–97, 126–146, 179–199, 219–239, and 281–301; these read LPFI…LLVM, SHLY…KRAI, IYSG…FELV, GLEA…GIIF, LIAG…FDVV, and MRLA…MDFF. 3 Solcar repeats span residues 9-108, 120-204, and 213-300; these read LPFI…FQTF, MTQK…IRKL, and EKTR…VMDF.

Belongs to the mitochondrial carrier (TC 2.A.29) family.

The protein resides in the mitochondrion inner membrane. Its function is as follows. Transports C5-C7 oxodicarboxylates across the inner membranes of mitochondria. Can transport 2-oxoadipate, 2-oxoglutarate, adipate, glutarate, 2-oxopimelate, oxaloacetate, citrate and malate. The main physiological role is probably to supply 2-oxoadipate and 2-oxoglutarate from the mitochondrial matrix to the cytosol where they are used in the biosynthesis of lysine and glutamate, respectively, and in lysine catabolism. This chain is Mitochondrial 2-oxodicarboxylate carrier 1 (ODC1), found in Saccharomyces cerevisiae (strain ATCC 204508 / S288c) (Baker's yeast).